The primary structure comprises 379 residues: MSQEVIRGIALPPPAQPGDPLARVDTPSLVLDLAPFEANLRAMQAWADRHDVALRPHAKAHKCPEIALRQLALGARGICCQKVSEALPFVAAGIQDIHISNEVVGPAKLALLGQLARVAKISVCVDNAHNLSQVSQAMVQAGAQIDVLVEVDVGQGRCGVSDDALVLALAQQARDLPGVNFAGLQAYHGSVQHYRTREERAEVCRQAARIAASYAQLLRESGIACDTITGGGTGSAEFDAASGVYTELQAGSYAFMDGDYGANEWDGPLAFENSLFVLATVMSKPAPDRVILDAGLKSTTAECGPPAIFGEPGLTYTAINDEHGVVRVEPGAQAPDLGAVLRLVPSHVDPTFNLHDGLVVVRDGVVEDIWEISARGFSR.

N6-(pyridoxal phosphate)lysine is present on lysine 59.

Belongs to the DSD1 family. Pyridoxal 5'-phosphate serves as cofactor. The cofactor is Mn(2+). Co(2+) is required as a cofactor. It depends on Ni(2+) as a cofactor. Requires Mg(2+) as cofactor.

The enzyme catalyses D-threonine = acetaldehyde + glycine. The catalysed reaction is D-allo-threonine = acetaldehyde + glycine. With respect to regulation, inhibited by the carbonyl reagents hydroxylamine, phenylhydrazine and semicarbazide. Inhibited by the chelating agent EDTA. Inhibited by the sulfhydryl reagent p-chloromercuribenzoic acid, and by sodium cyanide. Inhibited by iodoacetate, Ag(2)SO(4), HgCl(2) and CdCl(2). Competitively inhibited by beta-hydroxyaspartate and O-phospho-DL-threonine. In terms of biological role, catalyzes the reversible cleavage of D-threonine or D-allothreonine into glycine and acetaldehyde. Can also cleave D-beta-phenylserine, D-beta-hydroxy-alpha-aminovaleric acid, D-beta-3,4-dihydroxyphenylserine and D-beta-3,4-methylenedioxyphenylserine into glycine and the corresponding aldehyde compounds. Inactive towards D-serine, beta-hydroxyaspartate and O-phospho-DL-threonine. This Arthrobacter sp protein is D-threonine aldolase.